Here is a 336-residue protein sequence, read N- to C-terminus: Ornithine carbamoyltransferase, catabolic (336 aa).

Carbamoyl phosphate contacts are provided by residues 57–60 (STRT), Gln-84, Arg-108, and 135–138 (HPTQ). Residues Asn-169, Asp-233, and 237–238 (SM) contribute to the L-ornithine site. Residues 275 to 276 (CL) and Arg-322 each bind carbamoyl phosphate.

The protein belongs to the aspartate/ornithine carbamoyltransferase superfamily. OTCase family.

Its subcellular location is the cytoplasm. It catalyses the reaction carbamoyl phosphate + L-ornithine = L-citrulline + phosphate + H(+). The protein operates within amino-acid degradation; L-arginine degradation via ADI pathway; carbamoyl phosphate from L-arginine: step 2/2. Its function is as follows. Reversibly catalyzes the transfer of the carbamoyl group from carbamoyl phosphate (CP) to the N(epsilon) atom of ornithine (ORN) to produce L-citrulline. The sequence is that of Ornithine carbamoyltransferase, catabolic from Photobacterium profundum (strain SS9).